A 165-amino-acid polypeptide reads, in one-letter code: Nucleotide-binding protein Syncc9605_0652 (165 aa).

The protein belongs to the YajQ family.

In terms of biological role, nucleotide-binding protein. The polypeptide is Nucleotide-binding protein Syncc9605_0652 (Synechococcus sp. (strain CC9605)).